Here is a 201-residue protein sequence, read N- to C-terminus: Large ribosomal subunit protein bL25 (201 aa).

The disordered stretch occupies residues 181–201 (APRESEEEAEEEATETAKESE). Residues 185 to 194 (SEEEAEEEAT) show a composition bias toward acidic residues.

It belongs to the bacterial ribosomal protein bL25 family. CTC subfamily. Part of the 50S ribosomal subunit; part of the 5S rRNA/L5/L18/L25 subcomplex. Contacts the 5S rRNA. Binds to the 5S rRNA independently of L5 and L18.

Functionally, this is one of the proteins that binds to the 5S RNA in the ribosome where it forms part of the central protuberance. The protein is Large ribosomal subunit protein bL25 of Thermoanaerobacter pseudethanolicus (strain ATCC 33223 / 39E) (Clostridium thermohydrosulfuricum).